The following is a 186-amino-acid chain: Nucleoside diphosphate kinase 6 (186 aa).

Lys-19, Phe-68, Arg-96, Thr-102, Arg-116, and Asn-126 together coordinate ATP. His-129 serves as the catalytic Pros-phosphohistidine intermediate.

This sequence belongs to the NDK family. It depends on Mg(2+) as a cofactor. As to expression, expressed at a moderately low level in many tissues. Most abundant in kidney, prostate, ovary, intestine, and spleen.

It catalyses the reaction a 2'-deoxyribonucleoside 5'-diphosphate + ATP = a 2'-deoxyribonucleoside 5'-triphosphate + ADP. The catalysed reaction is a ribonucleoside 5'-diphosphate + ATP = a ribonucleoside 5'-triphosphate + ADP. Functionally, major role in the synthesis of nucleoside triphosphates other than ATP. The ATP gamma phosphate is transferred to the NDP beta phosphate via a ping-pong mechanism, using a phosphorylated active-site intermediate. Inhibitor of p53-induced apoptosis. The protein is Nucleoside diphosphate kinase 6 (NME6) of Homo sapiens (Human).